Reading from the N-terminus, the 207-residue chain is Guanylate kinase (207 aa).

Residues 4 to 184 (GTLYIVSAPS…ALMDFKAILR (181 aa)) form the Guanylate kinase-like domain. 11 to 18 (APSGAGKS) provides a ligand contact to ATP.

This sequence belongs to the guanylate kinase family.

Its subcellular location is the cytoplasm. It carries out the reaction GMP + ATP = GDP + ADP. Functionally, essential for recycling GMP and indirectly, cGMP. This Vibrio parahaemolyticus serotype O3:K6 (strain RIMD 2210633) protein is Guanylate kinase.